The primary structure comprises 357 residues: Transcription factor unc-86 (357 aa).

The POU-IV box signature appears at 35–44 (RAAQVALADI). The region spanning 155 to 232 (DMDTDPRQLE…ILHSWLEKAE (78 aa)) is the POU-specific domain. The homeobox DNA-binding region spans 253–312 (KKRKRTSIAAPEKRELEQFFKQQPRPSGERIASIADRLDLKKNVVRVWFCNQRQKQKRDF).

It belongs to the POU transcription factor family. Class-4 subfamily. As to quaternary structure, interacts with mec-3; the heterooligomer binds to the promoters of mec-3, mec-4 and mec-7. As to expression, specific to neurons and neuroblasts. Expressed in CEM head neurons and in IL2, URA, URB, URX and URY neurons. Not expressed in olfactory sensory neurons but expressed in AIZ interneurons.

The protein resides in the nucleus. In terms of biological role, transcription factor required for correct cell fate determination and differentiation in diverse neuronal cell lineages where it plays a role in specifying the fate of daughter cells during cell divisions. Involved in sensory neuron production and function. Binds both alone and with mec-3 to the mec-3 promoter to initiate and maintain mec-3 expression which is required for sensory neuron differentiation. In addition, binds both alone and with mec-3 to the promoters of mec-4 and mec-7 which act to regulate sensory neuron function. Involved in determining the identity of the serotonergic NSM neurons and the cholinergic IL2 sensory and URA motor neurons. Promotes expression of the cfi-1 transcription factor in the URA and IL2 neurons which in turn activates normal URA and IL2 gene expression. Required to determine the identity of BDU sensory neurons in concert with transcription factor unc-86, regulating expression of a number of genes, including transcription factors ceh-14 and ahr-1, neuropeptides flp-10, nlp-1 and nlp-15, and tyramine receptor-encoding ser-2. Regulates expression of a number of genes in NSM neurons including bas-1, cat-1, dop-3, mgl-3, nlp-13, scd-2 and ptps-1. In the IL2 neurons, required for expression of cho-1, gcy-19, klp-6, lag-2, unc-5 and unc-17. Promotes expression of pkd-2 in the male-specific CEM head neurons. Required for dauer-specific branching of IL2Q neurons and nictation behavior. Controls both the timing and direction of axon outgrowth in HSN neurons. Plays a role in serotonin production by regulating expression of the tryptophan hydrolase tph-1 which catalyzes serotonin synthesis, in the AIM, NSM, HSN and RIH neurons. Involved in regulation of lin-11 expression in the AIZ interneurons, the major interneurons of the olfactory pathway, and is required for odortaxis behavior. Involved in neurite pruning between AIM neurons during larval development by regulating the expression of transcription factor mbr-1. Required for correct localization of unc-40. The sequence is that of Transcription factor unc-86 (unc-86) from Caenorhabditis elegans.